The following is a 283-amino-acid chain: 4-diphosphocytidyl-2-C-methyl-D-erythritol kinase (283 aa).

Lys10 is a catalytic residue. 99-109 (PMGGGLGGGSS) serves as a coordination point for ATP. The active site involves Asp141.

It belongs to the GHMP kinase family. IspE subfamily. In terms of assembly, homodimer.

The enzyme catalyses 4-CDP-2-C-methyl-D-erythritol + ATP = 4-CDP-2-C-methyl-D-erythritol 2-phosphate + ADP + H(+). It functions in the pathway isoprenoid biosynthesis; isopentenyl diphosphate biosynthesis via DXP pathway; isopentenyl diphosphate from 1-deoxy-D-xylulose 5-phosphate: step 3/6. Functionally, catalyzes the phosphorylation of the position 2 hydroxy group of 4-diphosphocytidyl-2C-methyl-D-erythritol. This chain is 4-diphosphocytidyl-2-C-methyl-D-erythritol kinase, found in Shigella dysenteriae serotype 1 (strain Sd197).